A 185-amino-acid chain; its full sequence is Elongation factor P (185 aa).

It belongs to the elongation factor P family.

The protein localises to the cytoplasm. Its pathway is protein biosynthesis; polypeptide chain elongation. Involved in peptide bond synthesis. Stimulates efficient translation and peptide-bond synthesis on native or reconstituted 70S ribosomes in vitro. Probably functions indirectly by altering the affinity of the ribosome for aminoacyl-tRNA, thus increasing their reactivity as acceptors for peptidyl transferase. This Streptococcus pyogenes serotype M4 (strain MGAS10750) protein is Elongation factor P.